A 194-amino-acid polypeptide reads, in one-letter code: Small ribosomal subunit protein eS7 (194 aa).

The protein belongs to the eukaryotic ribosomal protein eS7 family.

The polypeptide is Small ribosomal subunit protein eS7 (rps-7) (Caenorhabditis elegans).